A 169-amino-acid chain; its full sequence is Ion-translocating oxidoreductase complex subunit B (169 aa).

A hydrophobic region spans residues 1 to 23 (MIISIIIFSILSFILGVIVSLVS). Residues 30–89 (SNLSLINDIDELLPQMQCAQCGYPGCYAYSQAIVDGNENIYKCIPGGKEVVLKLENLLNK) enclose the 4Fe-4S domain. Residues cysteine 47, cysteine 50, cysteine 55, cysteine 72, cysteine 116, cysteine 119, cysteine 122, cysteine 126, cysteine 146, cysteine 149, cysteine 152, and cysteine 156 each contribute to the [4Fe-4S] cluster site. 4Fe-4S ferredoxin-type domains follow at residues 107–136 (SIVE…GTYN) and 137–166 (FRHT…KKIM).

It belongs to the 4Fe4S bacterial-type ferredoxin family. RnfB subfamily. In terms of assembly, the complex is composed of six subunits: RnfA, RnfB, RnfC, RnfD, RnfE and RnfG. [4Fe-4S] cluster is required as a cofactor.

It localises to the cell inner membrane. Its function is as follows. Part of a membrane-bound complex that couples electron transfer with translocation of ions across the membrane. The sequence is that of Ion-translocating oxidoreductase complex subunit B from Buchnera aphidicola subsp. Baizongia pistaciae (strain Bp).